The following is an 869-amino-acid chain: Kinesin-like protein KIN-10A (869 aa).

A compositionally biased stretch (polar residues) spans 1 to 36 (MAPTPSSSRSNQTQYTLIRTPQTKQRLNFHSKTPNP). Positions 1–50 (MAPTPSSSRSNQTQYTLIRTPQTKQRLNFHSKTPNPDGSKDPSPPEHPVE) are disordered. Over residues 38-50 (GSKDPSPPEHPVE) the composition is skewed to basic and acidic residues. The Kinesin motor domain maps to 48–367 (PVEVIGRIRD…LEYGAKAKCI (320 aa)). 129 to 136 (GPTGAGKS) is an ATP binding site. The stretch at 393–515 (RIAAMDEFII…EIEVEFRRSN (123 aa)) forms a coiled coil.

It belongs to the TRAFAC class myosin-kinesin ATPase superfamily. Kinesin family. KIN-10 subfamily. Binds microtubules.

The protein resides in the cytoplasm. Its subcellular location is the cytoskeleton. It is found in the phragmoplast. Its function is as follows. Probable plus end-directed motor protein that may contribute to the transport of Golgi-derived vesicles in the phragmoplast. This Arabidopsis thaliana (Mouse-ear cress) protein is Kinesin-like protein KIN-10A.